A 337-amino-acid polypeptide reads, in one-letter code: Vacuolar protein sorting-associated protein 26B-A (337 aa).

Residues 313–337 (RFEGTSHPETRPQHSGAAAVEQEHE) are disordered.

The protein belongs to the VPS26 family. Component of the heterotrimeric retromer cargo-selective complex (CSC) which is believed to associate with variable sorting nexins to form functionally distinct retromer complex variants.

The protein resides in the cytoplasm. It localises to the endosome membrane. Its subcellular location is the early endosome. In terms of biological role, acts as a component of the retromer cargo-selective complex (CSC). The CSC is believed to be the core functional component of retromer or respective retromer complex variants acting to prevent missorting of selected transmembrane cargo proteins into the lysosomal degradation pathway. Retromer mediates retrograde transport of cargo proteins from endosomes to the trans-Golgi network (TGN). This chain is Vacuolar protein sorting-associated protein 26B-A (vps26b-a), found in Xenopus laevis (African clawed frog).